The following is a 411-amino-acid chain: Probable indole-3-pyruvate monooxygenase YUCCA4 (411 aa).

FAD is bound at residue 21–26; sequence GAGPSG. Position 183-188 (183-188) interacts with NADP(+); the sequence is GCGNSG.

This sequence belongs to the FMO family. FAD is required as a cofactor. As to expression, expressed in leaves, stems, flowers, buds and siliques. Detected in the apical gynoecium and in the developing ovules.

It localises to the cytoplasm. It is found in the endoplasmic reticulum membrane. It carries out the reaction indole-3-pyruvate + NADPH + O2 + H(+) = (indol-3-yl)acetate + CO2 + NADP(+) + H2O. It participates in plant hormone metabolism; auxin biosynthesis. Involved in auxin biosynthesis. Both isoforms are catalitically active. Involved during embryogenesis and seedling development. Required for the formation of floral organs and vascular tissues. Belongs to the set of redundant YUCCA genes probably responsible for auxin biosynthesis in shoots. This Arabidopsis thaliana (Mouse-ear cress) protein is Probable indole-3-pyruvate monooxygenase YUCCA4 (YUC4).